Consider the following 241-residue polypeptide: LexA repressor (241 aa).

A DNA-binding region (H-T-H motif) is located at residues 41–61 (FREIGNAAGLKSPSSVKHQLQ). Residues serine 165 and lysine 202 each act as for autocatalytic cleavage activity in the active site.

It belongs to the peptidase S24 family. In terms of assembly, homodimer.

The catalysed reaction is Hydrolysis of Ala-|-Gly bond in repressor LexA.. In terms of biological role, represses a number of genes involved in the response to DNA damage (SOS response), including recA and lexA. In the presence of single-stranded DNA, RecA interacts with LexA causing an autocatalytic cleavage which disrupts the DNA-binding part of LexA, leading to derepression of the SOS regulon and eventually DNA repair. The chain is LexA repressor from Bifidobacterium longum subsp. infantis (strain ATCC 15697 / DSM 20088 / JCM 1222 / NCTC 11817 / S12).